The following is an 85-amino-acid chain: Dual endothelin-1/VEGF signal peptide receptor (85 aa).

Residues 1-18 are Extracellular-facing; that stretch reads MTMFKGSNEMKSRWNWGS. A helical transmembrane segment spans residues 19 to 37; that stretch reads ITCIICFTCVGSQLSMSSS. Residues 38-85 lie on the Cytoplasmic side of the membrane; that stretch reads KASNFSGPLQLYQRELEIFIVLTDVPNYRLIKENSHLHTTIVDQGRTV.

In terms of processing, N-glycosylated. As to expression, expressed in kidney. Expressed in endothelial cells.

It localises to the cell membrane. Functionally, dual receptor for both endothelin-1 and the signal sequence of vascular endothelial growth factor A. Does not act as a receptor for angiotensin-2. Does not bind the VEGFA mature protein. May play a role in angiogenesis with a significant role in cardiovascular and neural development. This is Dual endothelin-1/VEGF signal peptide receptor from Homo sapiens (Human).